The chain runs to 341 residues: ATP synthase subunit a 2 (341 aa).

Positions 1–33 are cleaved as a signal peptide; it reads MKRVKVIQIKGFFRVMALLAPLLLNAYLPVQAS. 6 helical membrane-spanning segments follow: residues 112–132, 173–193, 195–215, 242–262, 273–293, and 307–327; these read VVMLWIVSAILLVLFSFVGAA, LPYLLTVFMFILLCNILGLIP, GATATGNINVTLTLAVFTFFI, WIIMIPIEVIGLFTKPFALTV, IVILSLIFISFILKSYVVAAA, and IFVAFLQAFIFTMLSALFIGL.

The protein belongs to the ATPase A chain family. In terms of assembly, F-type ATPases have 2 components, CF(1) - the catalytic core - and CF(0) - the membrane proton channel. CF(1) has five subunits: alpha(3), beta(3), gamma(1), delta(1), epsilon(1). CF(0) has four main subunits: a, b, b' and c.

It is found in the cell inner membrane. Functionally, key component of the proton channel; it plays a direct role in the translocation of protons across the membrane. This is ATP synthase subunit a 2 from Chlorobium luteolum (strain DSM 273 / BCRC 81028 / 2530) (Pelodictyon luteolum).